The following is a 318-amino-acid chain: Aspartate carbamoyltransferase catalytic subunit (318 aa).

Residues Arg56 and Thr57 each coordinate carbamoyl phosphate. Lys84 contributes to the L-aspartate binding site. Residues Arg106, His143, and Gln146 each coordinate carbamoyl phosphate. L-aspartate is bound by residues Arg176 and Arg230. Carbamoyl phosphate is bound by residues Gly271 and Pro272.

The protein belongs to the aspartate/ornithine carbamoyltransferase superfamily. ATCase family. Heterododecamer (2C3:3R2) of six catalytic PyrB chains organized as two trimers (C3), and six regulatory PyrI chains organized as three dimers (R2).

The enzyme catalyses carbamoyl phosphate + L-aspartate = N-carbamoyl-L-aspartate + phosphate + H(+). Its pathway is pyrimidine metabolism; UMP biosynthesis via de novo pathway; (S)-dihydroorotate from bicarbonate: step 2/3. Catalyzes the condensation of carbamoyl phosphate and aspartate to form carbamoyl aspartate and inorganic phosphate, the committed step in the de novo pyrimidine nucleotide biosynthesis pathway. The polypeptide is Aspartate carbamoyltransferase catalytic subunit (Mycobacterium avium (strain 104)).